Here is a 234-residue protein sequence, read N- to C-terminus: uncharacterized protein (234 aa).

In terms of domain architecture, HTH tetR-type spans 24 to 83 (VERRNELVDGTIEAIRRHGRFLSMDEIAAEIGVSKTVLYRYFVDKNDLTTAVMMRFTQTT). Residues 46–65 (SMDEIAAEIGVSKTVLYRYF) constitute a DNA-binding region (H-T-H motif).

This is an uncharacterized protein from Mycobacterium tuberculosis (strain CDC 1551 / Oshkosh).